The sequence spans 475 residues: Aspartyl/glutamyl-tRNA(Asn/Gln) amidotransferase subunit B (475 aa).

The protein belongs to the GatB/GatE family. GatB subfamily. As to quaternary structure, heterotrimer of A, B and C subunits.

The enzyme catalyses L-glutamyl-tRNA(Gln) + L-glutamine + ATP + H2O = L-glutaminyl-tRNA(Gln) + L-glutamate + ADP + phosphate + H(+). It carries out the reaction L-aspartyl-tRNA(Asn) + L-glutamine + ATP + H2O = L-asparaginyl-tRNA(Asn) + L-glutamate + ADP + phosphate + 2 H(+). Allows the formation of correctly charged Asn-tRNA(Asn) or Gln-tRNA(Gln) through the transamidation of misacylated Asp-tRNA(Asn) or Glu-tRNA(Gln) in organisms which lack either or both of asparaginyl-tRNA or glutaminyl-tRNA synthetases. The reaction takes place in the presence of glutamine and ATP through an activated phospho-Asp-tRNA(Asn) or phospho-Glu-tRNA(Gln). In Staphylococcus aureus (strain MRSA252), this protein is Aspartyl/glutamyl-tRNA(Asn/Gln) amidotransferase subunit B.